Here is a 465-residue protein sequence, read N- to C-terminus: Light-independent protochlorophyllide reductase subunit N (465 aa).

3 residues coordinate [4Fe-4S] cluster: cysteine 22, cysteine 47, and cysteine 107.

It belongs to the BchN/ChlN family. Protochlorophyllide reductase is composed of three subunits; ChlL, ChlN and ChlB. Forms a heterotetramer of two ChlB and two ChlN subunits. The cofactor is [4Fe-4S] cluster.

The protein localises to the plastid. The protein resides in the chloroplast. It catalyses the reaction chlorophyllide a + oxidized 2[4Fe-4S]-[ferredoxin] + 2 ADP + 2 phosphate = protochlorophyllide a + reduced 2[4Fe-4S]-[ferredoxin] + 2 ATP + 2 H2O. It functions in the pathway porphyrin-containing compound metabolism; chlorophyll biosynthesis (light-independent). Functionally, component of the dark-operative protochlorophyllide reductase (DPOR) that uses Mg-ATP and reduced ferredoxin to reduce ring D of protochlorophyllide (Pchlide) to form chlorophyllide a (Chlide). This reaction is light-independent. The NB-protein (ChlN-ChlB) is the catalytic component of the complex. The polypeptide is Light-independent protochlorophyllide reductase subunit N (Marchantia polymorpha (Common liverwort)).